The following is a 128-amino-acid chain: uncharacterized protein (128 aa).

The 69-residue stretch at 6–74 (GSKLQGKITG…KDGKIGLSIK (69 aa)) folds into the S1 motif domain. The segment at 72-128 (SIKKAKDRPQARPRNDFRPKESFEQKMNKFLKDSEDRLSSLKRNTESKRGGRGARRG) is disordered. The segment covering 78-120 (DRPQARPRNDFRPKESFEQKMNKFLKDSEDRLSSLKRNTESKR) has biased composition (basic and acidic residues).

This sequence belongs to the peptidase U57 family.

This is an uncharacterized protein from Bacillus subtilis (strain 168).